An 81-amino-acid chain; its full sequence is Short neurotoxin 1 (81 aa).

The signal sequence occupies residues 1–21 (MKTLLLTLVVVTIVCLDLGYT). Disulfide bonds link cysteine 24/cysteine 43, cysteine 38/cysteine 60, cysteine 62/cysteine 73, and cysteine 74/cysteine 79.

This sequence belongs to the three-finger toxin family. Short-chain subfamily. Type I alpha-neurotoxin sub-subfamily. Expressed by the venom gland.

It localises to the secreted. Its function is as follows. Binds to muscle nicotinic acetylcholine receptor (nAChR) and inhibit acetylcholine from binding to the receptor, thereby impairing neuromuscular transmission. The chain is Short neurotoxin 1 from Austrelaps superbus (Lowland copperhead snake).